The primary structure comprises 260 residues: Pyridoxine 5'-phosphate synthase (260 aa).

Position 15 (Asn-15) interacts with 3-amino-2-oxopropyl phosphate. 17–18 (DH) lines the 1-deoxy-D-xylulose 5-phosphate pocket. Arg-26 contacts 3-amino-2-oxopropyl phosphate. Catalysis depends on His-51, which acts as the Proton acceptor. Arg-53 and His-58 together coordinate 1-deoxy-D-xylulose 5-phosphate. The Proton acceptor role is filled by Glu-78. Thr-108 is a 1-deoxy-D-xylulose 5-phosphate binding site. His-199 functions as the Proton donor in the catalytic mechanism. 3-amino-2-oxopropyl phosphate is bound by residues Gly-200 and 221 to 222 (GH).

The protein belongs to the PNP synthase family. In terms of assembly, homooctamer; tetramer of dimers.

Its subcellular location is the cytoplasm. The enzyme catalyses 3-amino-2-oxopropyl phosphate + 1-deoxy-D-xylulose 5-phosphate = pyridoxine 5'-phosphate + phosphate + 2 H2O + H(+). It functions in the pathway cofactor biosynthesis; pyridoxine 5'-phosphate biosynthesis; pyridoxine 5'-phosphate from D-erythrose 4-phosphate: step 5/5. In terms of biological role, catalyzes the complicated ring closure reaction between the two acyclic compounds 1-deoxy-D-xylulose-5-phosphate (DXP) and 3-amino-2-oxopropyl phosphate (1-amino-acetone-3-phosphate or AAP) to form pyridoxine 5'-phosphate (PNP) and inorganic phosphate. The sequence is that of Pyridoxine 5'-phosphate synthase from Cupriavidus necator (strain ATCC 17699 / DSM 428 / KCTC 22496 / NCIMB 10442 / H16 / Stanier 337) (Ralstonia eutropha).